We begin with the raw amino-acid sequence, 639 residues long: Probable serine/threonine-protein kinase DDB_G0282777 (639 aa).

Residues 7–122 (LKENKESLKD…EDLKSIILTS (116 aa)) adopt a coiled-coil conformation. A Protein kinase domain is found at 233-588 (MHMVGDIKKG…SNNNQNHTNI (356 aa)). Residues 239-247 (IKKGSISSD) and Lys-284 contribute to the ATP site. Asp-439 functions as the Proton acceptor in the catalytic mechanism. Residues 601-639 (NTLETSTTNPNTNTTTSDTNTSTTSTTNTNTTTSNTITA) form a disordered region.

It belongs to the protein kinase superfamily. Ser/Thr protein kinase family.

The enzyme catalyses L-seryl-[protein] + ATP = O-phospho-L-seryl-[protein] + ADP + H(+). It catalyses the reaction L-threonyl-[protein] + ATP = O-phospho-L-threonyl-[protein] + ADP + H(+). This chain is Probable serine/threonine-protein kinase DDB_G0282777, found in Dictyostelium discoideum (Social amoeba).